The following is a 202-amino-acid chain: MDFVNNDTRQIAKNLLGVKVIYQDTTQTYTGYIVETEAYLGLNDRAAHGYGGKITPKVTSLYKRGGTIYAHVMHTHLLINFVTKSEGIPEGVLIRAIEPEDGLSAMFRNRGKKGYEVTNGPGKWTKAFNIPRAIDGARLNDCRLSIDTKNRKYPKDIIASPRIGIPNKGDWTHKSLRYTVKGNPFVSRMRKSDCMFPEDTWK.

The protein belongs to the DNA glycosylase MPG family.

The polypeptide is Putative 3-methyladenine DNA glycosylase (Staphylococcus aureus (strain MRSA252)).